The chain runs to 80 residues: U20-ctenitoxin-Pn1a (80 aa).

Cystine bridges form between C3/C20, C10/C26, C17/C52, C19/C40, C28/C38, C58/C71, and C75/C80.

In terms of tissue distribution, expressed by the venom gland.

It is found in the secreted. Omega-agatoxin are antagonists of voltage-gated calcium channels (Cav). Induces rapid general flaccid paralysis followed by death when injected into the cerebral ventricle of mice at dose levels of 3 ug per mouse. This is U20-ctenitoxin-Pn1a from Phoneutria nigriventer (Brazilian armed spider).